A 245-amino-acid polypeptide reads, in one-letter code: tRNA pseudouridine synthase A (245 aa).

Asp52 functions as the Nucleophile in the catalytic mechanism. A substrate-binding site is contributed by Tyr111.

This sequence belongs to the tRNA pseudouridine synthase TruA family. Homodimer.

The enzyme catalyses uridine(38/39/40) in tRNA = pseudouridine(38/39/40) in tRNA. Functionally, formation of pseudouridine at positions 38, 39 and 40 in the anticodon stem and loop of transfer RNAs. In Rickettsia africae (strain ESF-5), this protein is tRNA pseudouridine synthase A.